A 282-amino-acid polypeptide reads, in one-letter code: 4-diphosphocytidyl-2-C-methyl-D-erythritol kinase (282 aa).

Lys-9 is a catalytic residue. 98–108 (PMGGGLGGGSS) provides a ligand contact to ATP. Asp-140 is a catalytic residue.

It belongs to the GHMP kinase family. IspE subfamily. As to quaternary structure, homodimer.

It catalyses the reaction 4-CDP-2-C-methyl-D-erythritol + ATP = 4-CDP-2-C-methyl-D-erythritol 2-phosphate + ADP + H(+). Its pathway is isoprenoid biosynthesis; isopentenyl diphosphate biosynthesis via DXP pathway; isopentenyl diphosphate from 1-deoxy-D-xylulose 5-phosphate: step 3/6. Catalyzes the phosphorylation of the position 2 hydroxy group of 4-diphosphocytidyl-2C-methyl-D-erythritol. This Salmonella paratyphi B (strain ATCC BAA-1250 / SPB7) protein is 4-diphosphocytidyl-2-C-methyl-D-erythritol kinase.